The sequence spans 423 residues: Histone acetyltransferase type B subunit 2 (423 aa).

5 WD repeats span residues proline 138–glutamate 174, serine 175–serine 224, serine 228–lysine 268, proline 271–histidine 311, and glycine 315–serine 355. The segment at aspartate 357–aspartate 361 is interaction with the histone H4 N-terminus. The WD 6 repeat unit spans residues glycine 372–serine 412.

Belongs to the WD repeat RBAP46/RBAP48/MSI1 family. As to quaternary structure, component of the HAT-B complex composed of at least HAT1 and HAT2. The HAT-B complex binds to histone H4 tail.

Its subcellular location is the cytoplasm. It is found in the nucleus. Regulatory subunit of the histone acetylase B (HAT-B) complex. The complex acetylates 'Lys-12' of histone H4 which is required for telomeric silencing. The protein is Histone acetyltransferase type B subunit 2 (HAT2) of Eremothecium gossypii (strain ATCC 10895 / CBS 109.51 / FGSC 9923 / NRRL Y-1056) (Yeast).